The chain runs to 503 residues: Nuclear respiratory factor 1 (503 aa).

Residues 1 to 78 (MEEHGVTQTE…AHLAAAGPVG (78 aa)) are dimerization. The segment at 36–57 (SMLSADEDSPSSPEDTSYDDSD) is disordered. 5 positions are modified to phosphoserine; by CK2: Ser-39, Ser-44, Ser-46, Ser-47, and Ser-52. A Nuclear localization signal motif is present at residues 88 to 116 (GKKRKRPHVFESNPSIRKRQQTRLLRKLR). Residues 109–305 (TRLLRKLRAT…SIAHLVPSQT (197 aa)) mediate DNA binding. A Glycyl lysine isopeptide (Lys-Gly) (interchain with G-Cter in SUMO2) cross-link involves residue Lys-139. The required for transcriptional activation stretch occupies residues 301–476 (VPSQTVVQTF…AQGNGPVQVA (176 aa)).

The protein belongs to the NRF1/Ewg family. In terms of assembly, homodimer. Binds DNA as a dimer. Interacts with PPRC1. Post-translationally, phosphorylation enhances DNA binding. In terms of tissue distribution, ubiquitously expressed with strongest expression in skeletal muscle.

It localises to the nucleus. Transcription factor that activates the expression of the EIF2S1 (EIF2-alpha) gene. Links the transcriptional modulation of key metabolic genes to cellular growth and development. Implicated in the control of nuclear genes required for respiration, heme biosynthesis, and mitochondrial DNA transcription and replication. The chain is Nuclear respiratory factor 1 (NRF1) from Homo sapiens (Human).